The following is a 403-amino-acid chain: Argininosuccinate synthase (403 aa).

10-18 (AYSGGLDTS) provides a ligand contact to ATP. Residue Tyr87 participates in L-citrulline binding. Gly117 contributes to the ATP binding site. L-aspartate is bound by residues Thr119, Asn123, and Asp124. Position 123 (Asn123) interacts with L-citrulline. 5 residues coordinate L-citrulline: Arg127, Ser175, Ser184, Glu260, and Tyr272.

Belongs to the argininosuccinate synthase family. Type 1 subfamily. As to quaternary structure, homotetramer.

The protein resides in the cytoplasm. The enzyme catalyses L-citrulline + L-aspartate + ATP = 2-(N(omega)-L-arginino)succinate + AMP + diphosphate + H(+). Its pathway is amino-acid biosynthesis; L-arginine biosynthesis; L-arginine from L-ornithine and carbamoyl phosphate: step 2/3. The protein is Argininosuccinate synthase of Bacillus pumilus (strain SAFR-032).